The primary structure comprises 837 residues: MGELFRSEEMTLAQLFLQSEAAYCCVSELGELGKVQFRDLNPDVNVFQRKFVNEVRRCEEMDRKLRFVEKEIRKANIPIMDTGENPEVPFPRDMIDLEANFEKIENELKEINTNQEALKRNFLELTELKFILRKTQQFFDEMADPDLLGESSSLLEPSEMGRGTPLRLGFVAGVINRERIPTFERMLWRVCRGNVFLRQAEIENPLEDPVTGDYVHKSVFIIFFQGDQLKNRVKKICEGFRASLYPCPETPQERKEMASGVNTRIDDLQMVLNQMEDHRQRVLQAAAKNIRVWFIKVRKMKAIYHTLNLCNIDVTQKCLIAEVWCPVTDLDSIQFALRRGTEHSGSTVPSILNRMQTNQTPPTYNKTNKFTYGFQNIVDAYGIGTYREINPAPYTIITFPFLFAVMFGDFGHGILMTLFAVWMVLRESRILSQKNENEMFSTVFSGRYIILLMGVFSMYTGLIYNDCFSKSLNIFGSSWSVRPMFTYNWTEETLRGNPVLQLNPALPGVFGGPYPFGIDPIWNIATNKLTFLNSFKMKMSVILGIIHMLFGVSLSLFNHIYFKKPLNIYFGFIPEIIFMTSLFGYLVILIFYKWTAYDAHTSENAPSLLIHFINMFLFSYPESGYSMLYSGQKGIQCFLVVVALLCVPWMLLFKPLVLRRQYLRRKHLGTLNFGGIRVGNGPTEEDAEIIQHDQLSTHSEDADEPTEDEVFDFGATMVHQAIHTIEYCLGCISNTASYLRLWALSLAHAQLSEVLWTMVIHIGLSVKSLAGGLVLFFFFTAFATLTVAILLIMEGLSAFLHALRLHWVEFQNKFYSGTGFKFLPFSFEHIREGKFGE.

Residues 1 to 388 (MGELFRSEEM…DAYGIGTYRE (388 aa)) lie on the Cytoplasmic side of the membrane. Phosphothreonine occurs at positions 250 and 360. Tyr-364 is modified (phosphotyrosine). A helical transmembrane segment spans residues 389–407 (INPAPYTIITFPFLFAVMF). Over 408–409 (GD) the chain is Vacuolar. The chain crosses the membrane as a helical span at residues 410–426 (FGHGILMTLFAVWMVLR). The Cytoplasmic portion of the chain corresponds to 427-441 (ESRILSQKNENEMFS). The helical transmembrane segment at 442–471 (TVFSGRYIILLMGVFSMYTGLIYNDCFSKS) threads the bilayer. Topologically, residues 472–534 (LNIFGSSWSV…ATNKLTFLNS (63 aa)) are vacuolar. Residues 535–554 (FKMKMSVILGIIHMLFGVSL) form a helical membrane-spanning segment. Over 555-572 (SLFNHIYFKKPLNIYFGF) the chain is Cytoplasmic. A helical membrane pass occupies residues 573–593 (IPEIIFMTSLFGYLVILIFYK). At 594–638 (WTAYDAHTSENAPSLLIHFINMFLFSYPESGYSMLYSGQKGIQCF) the chain is on the vacuolar side. The helical transmembrane segment at 639 to 658 (LVVVALLCVPWMLLFKPLVL) threads the bilayer. At 659–724 (RRQYLRRKHL…ATMVHQAIHT (66 aa)) the chain is on the cytoplasmic side. Residues 725 to 749 (IEYCLGCISNTASYLRLWALSLAHA) traverse the membrane as a helical segment. Residues 750–770 (QLSEVLWTMVIHIGLSVKSLA) are Vacuolar-facing. The chain crosses the membrane as a helical span at residues 771–809 (GGLVLFFFFTAFATLTVAILLIMEGLSAFLHALRLHWVE). The Cytoplasmic portion of the chain corresponds to 810 to 837 (FQNKFYSGTGFKFLPFSFEHIREGKFGE).

Belongs to the V-ATPase 116 kDa subunit family. In terms of assembly, V-ATPase is a heteromultimeric enzyme made up of two complexes: the ATP-hydrolytic V1 complex and the proton translocation V0 complex. The V1 complex consists of three catalytic AB heterodimers that form a heterohexamer, three peripheral stalks each consisting of EG heterodimers, one central rotor including subunits D and F, and the regulatory subunits C and H. The proton translocation complex V0 consists of the proton transport subunit a, a ring of proteolipid subunits c9c'', rotary subunit d, subunits e and f, and the accessory subunits ATP6AP1/Ac45 and ATP6AP2/PRR. Interacts with SPAAR.

Its subcellular location is the cytoplasmic vesicle. It is found in the clathrin-coated vesicle membrane. The protein localises to the secretory vesicle. The protein resides in the synaptic vesicle membrane. It localises to the melanosome. In terms of biological role, subunit of the V0 complex of vacuolar(H+)-ATPase (V-ATPase), a multisubunit enzyme composed of a peripheral complex (V1) that hydrolyzes ATP and a membrane integral complex (V0) that translocates protons. V-ATPase is responsible for the acidification of various organelles, such as lysosomes, endosomes, the trans-Golgi network, and secretory granules, including synaptic vesicles. In certain cell types, can be exported to the plasma membrane, where it is involved in the acidification of the extracellular environment. Required for assembly and activity of the vacuolar ATPase. Through its action on compartment acidification, plays an essential role in neuronal development in terms of integrity and connectivity of neurons. This chain is V-type proton ATPase 116 kDa subunit a 1 (ATP6V0A1), found in Pongo abelii (Sumatran orangutan).